The primary structure comprises 312 residues: tRNA dimethylallyltransferase (312 aa).

An ATP-binding site is contributed by 14 to 21 (GPTASGKS). 16 to 21 (TASGKS) serves as a coordination point for substrate. Interaction with substrate tRNA regions lie at residues 39–42 (DSSL) and 163–167 (QRLQR).

It belongs to the IPP transferase family. As to quaternary structure, monomer. Requires Mg(2+) as cofactor.

It catalyses the reaction adenosine(37) in tRNA + dimethylallyl diphosphate = N(6)-dimethylallyladenosine(37) in tRNA + diphosphate. In terms of biological role, catalyzes the transfer of a dimethylallyl group onto the adenine at position 37 in tRNAs that read codons beginning with uridine, leading to the formation of N6-(dimethylallyl)adenosine (i(6)A). The protein is tRNA dimethylallyltransferase of Methylococcus capsulatus (strain ATCC 33009 / NCIMB 11132 / Bath).